The primary structure comprises 346 residues: Peroxidase 37 (346 aa).

Positions 1–22 (MHSSLIKLGFLLLLIQVSLSHA) are cleaved as a signal peptide. The residue at position 23 (glutamine 23) is a Pyrrolidone carboxylic acid. 4 disulfides stabilise this stretch: cysteine 33–cysteine 113, cysteine 66–cysteine 71, cysteine 119–cysteine 323, and cysteine 199–cysteine 231. Histidine 64 (proton acceptor) is an active-site residue. Positions 65, 68, 70, 72, and 74 each coordinate Ca(2+). An N-linked (GlcNAc...) asparagine glycan is attached at asparagine 79. A substrate-binding site is contributed by proline 161. Heme b is bound at residue histidine 192. Threonine 193 is a binding site for Ca(2+). N-linked (GlcNAc...) asparagine glycosylation is found at asparagine 208 and asparagine 236. Ca(2+)-binding residues include aspartate 244, threonine 247, and aspartate 252.

It belongs to the peroxidase family. Classical plant (class III) peroxidase subfamily. It depends on heme b as a cofactor. Ca(2+) serves as cofactor.

It is found in the secreted. It localises to the vacuole. The enzyme catalyses 2 a phenolic donor + H2O2 = 2 a phenolic radical donor + 2 H2O. Removal of H(2)O(2), oxidation of toxic reductants, biosynthesis and degradation of lignin, suberization, auxin catabolism, response to environmental stresses such as wounding, pathogen attack and oxidative stress. These functions might be dependent on each isozyme/isoform in each plant tissue. In Arabidopsis thaliana (Mouse-ear cress), this protein is Peroxidase 37 (PER37).